We begin with the raw amino-acid sequence, 901 residues long: Protein translocase subunit SecA (901 aa).

ATP is bound by residues glutamine 87, 105 to 109 (GEGKT), and aspartate 512. A disordered region spans residues 855 to 891 (QQLSHQDDETAAAAALAEQTGERKVGRNDPCPCGSGK). The Zn(2+) site is built by cysteine 885, cysteine 887, cysteine 896, and histidine 897.

Belongs to the SecA family. Monomer and homodimer. Part of the essential Sec protein translocation apparatus which comprises SecA, SecYEG and auxiliary proteins SecDF-YajC and YidC. Zn(2+) serves as cofactor.

The protein resides in the cell inner membrane. The protein localises to the cytoplasm. The catalysed reaction is ATP + H2O + cellular proteinSide 1 = ADP + phosphate + cellular proteinSide 2.. Its function is as follows. Part of the Sec protein translocase complex. Interacts with the SecYEG preprotein conducting channel. Has a central role in coupling the hydrolysis of ATP to the transfer of proteins into and across the cell membrane, serving both as a receptor for the preprotein-SecB complex and as an ATP-driven molecular motor driving the stepwise translocation of polypeptide chains across the membrane. The chain is Protein translocase subunit SecA from Cronobacter sakazakii (strain ATCC BAA-894) (Enterobacter sakazakii).